Consider the following 408-residue polypeptide: DNA polymerase processivity factor (408 aa).

The Nuclear localization signal motif lies at 344–353 (KKRRNLLTKR).

The protein belongs to the herpesviridae DNA polymerase processivity factor family. Interacts with the DNA polymerase catalytic subunit. Interacts with the origin-binding protein.

The protein resides in the host nucleus. Plays an essential role in viral DNA replication by acting as the polymerase accessory subunit. Associates with the viral polymerase to increase its processivity and forms high-affinity direct interactions with DNA. Facilitates the origin-binding protein loading onto DNA thus increasing its ability to assemble into a functional complex capable of unwinding duplex DNA. The sequence is that of DNA polymerase processivity factor from Varicella-zoster virus (strain Dumas) (HHV-3).